Reading from the N-terminus, the 439-residue chain is UDP-N-acetylglucosamine--N-acetylmuramyl-(pentapeptide) pyrophosphoryl-undecaprenol N-acetylglucosamine transferase (439 aa).

UDP-N-acetyl-alpha-D-glucosamine contacts are provided by residues 25-27 (TGG), arginine 218, serine 248, and glutamine 362.

It belongs to the glycosyltransferase 28 family. MurG subfamily.

It localises to the cell membrane. The catalysed reaction is di-trans,octa-cis-undecaprenyl diphospho-N-acetyl-alpha-D-muramoyl-L-alanyl-D-glutamyl-meso-2,6-diaminopimeloyl-D-alanyl-D-alanine + UDP-N-acetyl-alpha-D-glucosamine = di-trans,octa-cis-undecaprenyl diphospho-[N-acetyl-alpha-D-glucosaminyl-(1-&gt;4)]-N-acetyl-alpha-D-muramoyl-L-alanyl-D-glutamyl-meso-2,6-diaminopimeloyl-D-alanyl-D-alanine + UDP + H(+). The protein operates within cell wall biogenesis; peptidoglycan biosynthesis. In terms of biological role, cell wall formation. Catalyzes the transfer of a GlcNAc subunit on undecaprenyl-pyrophosphoryl-MurNAc-pentapeptide (lipid intermediate I) to form undecaprenyl-pyrophosphoryl-MurNAc-(pentapeptide)GlcNAc (lipid intermediate II). The protein is UDP-N-acetylglucosamine--N-acetylmuramyl-(pentapeptide) pyrophosphoryl-undecaprenol N-acetylglucosamine transferase of Roseiflexus sp. (strain RS-1).